The chain runs to 46 residues: Mu-segestritoxin-Sf1b (46 aa).

Cystine bridges form between cysteine 3–cysteine 19, cysteine 10–cysteine 22, cysteine 18–cysteine 42, and cysteine 24–cysteine 40. Positions 31–33 are keys region for toxin activity; the sequence is RPW.

Belongs to the neurotoxin 16 (SFI) family. In terms of tissue distribution, expressed by the venom gland.

It localises to the secreted. Insecticidal toxin. Causes flaccid paralysis followed by death when injected into Heliothis virescens larvae. Does not induce any toxic effects when injected intravenously into adult mice at a dose of 1.25 mg/kg body weight. The polypeptide is Mu-segestritoxin-Sf1b (Segestria florentina (Tube-web spider)).